The sequence spans 229 residues: MATSSHLLPQALHMIPRTPSFSSKNLGVSSILPRASSVNSRLSVSRVFLNHSSSNFGFAIDSKKRKEFIAKAEESTEGETEAVVENAVETEAEGEGEATVAAEEAKPPWKTRVKLGDIMGLLNKKAIEVAETVRPVPGLRTGDIVEIKLEVPENKRRLSIYKGIVMSRQNAGIHTTIRIRRIIAGIGVEIVFPIYSPNIKEIKVVSHRKVRRARLYYLRDKLPRLSTFK.

The transit peptide at 1–70 directs the protein to the chloroplast; the sequence is MATSSHLLPQ…DSKKRKEFIA (70 aa).

It belongs to the bacterial ribosomal protein bL19 family. Part of the 50S ribosomal subunit.

It is found in the plastid. Its subcellular location is the chloroplast. In terms of biological role, located at the 30S-50S ribosomal subunit interface and binds directly to 23S ribosomal RNA. This is Large ribosomal subunit protein bL19cy from Arabidopsis thaliana (Mouse-ear cress).